The following is a 206-amino-acid chain: Small ribosomal subunit protein uS4 (206 aa).

Residues 96-156 (GRLDNVVYRM…EKAKKQSRVK (61 aa)) enclose the S4 RNA-binding domain.

The protein belongs to the universal ribosomal protein uS4 family. In terms of assembly, part of the 30S ribosomal subunit. Contacts protein S5. The interaction surface between S4 and S5 is involved in control of translational fidelity.

One of the primary rRNA binding proteins, it binds directly to 16S rRNA where it nucleates assembly of the body of the 30S subunit. Its function is as follows. With S5 and S12 plays an important role in translational accuracy. In Pectobacterium atrosepticum (strain SCRI 1043 / ATCC BAA-672) (Erwinia carotovora subsp. atroseptica), this protein is Small ribosomal subunit protein uS4.